The primary structure comprises 265 residues: Indole-3-glycerol phosphate synthase (265 aa).

Belongs to the TrpC family.

It catalyses the reaction 1-(2-carboxyphenylamino)-1-deoxy-D-ribulose 5-phosphate + H(+) = (1S,2R)-1-C-(indol-3-yl)glycerol 3-phosphate + CO2 + H2O. It functions in the pathway amino-acid biosynthesis; L-tryptophan biosynthesis; L-tryptophan from chorismate: step 4/5. In Xanthomonas axonopodis pv. citri (strain 306), this protein is Indole-3-glycerol phosphate synthase.